Consider the following 507-residue polypeptide: WD repeat-containing protein fzy-1 (507 aa).

Disordered regions lie at residues 1–39 and 74–95; these read MNNKGRTPGSAGRTVRSSAQQNGLTMRKRDMTPTRNTNL and NKENLNNSMSEPNSPEKKSVEG. 2 stretches are compositionally biased toward polar residues: residues 15–24 and 74–86; these read VRSSAQQNGL and NKENLNNSMSEPN. WD repeat units follow at residues 219–258, 313–352, 364–406, and 411–450; these read TNEGLITSVRWSQEGRYISLGYASGAVKIYDPNRPKTTEY, GHCRDVTALEWSADENMCVSGSSDRTAKIWDGRHVRGSTV, EHTG…QKVR, and CETGGVGGIVFNRPYSEMLTASDDGFLRIYRFNANYKLSH.

Belongs to the WD repeat CDC20/Fizzy family.

The protein resides in the chromosome. The protein localises to the cytoplasm. In terms of biological role, plays a role in metaphase-anaphase transition during meiosis I. Required for embryonic anterior-posterior axis formation. The sequence is that of WD repeat-containing protein fzy-1 from Caenorhabditis elegans.